The sequence spans 146 residues: Snaclec 1 (146 aa).

Positions M1 to A23 are cleaved as a signal peptide. 3 disulfide bridges follow: C25-C36, C53-C142, and C119-C134. In terms of domain architecture, C-type lectin spans Y32–K143.

The protein belongs to the snaclec family. In terms of assembly, heterodimer; disulfide-linked. As to expression, expressed by the venom gland.

It localises to the secreted. In terms of biological role, interferes with one step of hemostasis (modulation of platelet aggregation, or coagulation cascade, for example). The polypeptide is Snaclec 1 (Bitis arietans (African puff adder)).